The sequence spans 426 residues: Histidine--tRNA ligase (426 aa).

This sequence belongs to the class-II aminoacyl-tRNA synthetase family. As to quaternary structure, homodimer.

The protein localises to the cytoplasm. It carries out the reaction tRNA(His) + L-histidine + ATP = L-histidyl-tRNA(His) + AMP + diphosphate + H(+). The chain is Histidine--tRNA ligase from Prochlorococcus marinus (strain MIT 9301).